The following is a 192-amino-acid chain: ATP-dependent Clp protease proteolytic subunit 1 (192 aa).

The active-site Nucleophile is the serine 92. Histidine 117 is an active-site residue.

The protein belongs to the peptidase S14 family. In terms of assembly, fourteen ClpP subunits assemble into 2 heptameric rings which stack back to back to give a disk-like structure with a central cavity, resembling the structure of eukaryotic proteasomes.

The protein localises to the cytoplasm. It carries out the reaction Hydrolysis of proteins to small peptides in the presence of ATP and magnesium. alpha-casein is the usual test substrate. In the absence of ATP, only oligopeptides shorter than five residues are hydrolyzed (such as succinyl-Leu-Tyr-|-NHMec, and Leu-Tyr-Leu-|-Tyr-Trp, in which cleavage of the -Tyr-|-Leu- and -Tyr-|-Trp bonds also occurs).. Functionally, cleaves peptides in various proteins in a process that requires ATP hydrolysis. Has a chymotrypsin-like activity. Plays a major role in the degradation of misfolded proteins. The sequence is that of ATP-dependent Clp protease proteolytic subunit 1 from Chlamydia trachomatis serovar D (strain ATCC VR-885 / DSM 19411 / UW-3/Cx).